The sequence spans 621 residues: MALGLEQAEEQRLYQQTLLQDGLKDMLDHGKFLDCVVRAGEREFPCHRLVLAACSPYFRARFLAEPERAGELHLEEVSPDVVAQVLHYLYTSEIALDEASVQDLFAAAHRFQIPSIFTICVSFLQKRLCLSNCLAVFRLGLLLDCARLAVAARDFICAHFTLVARDADFLGLSADELIAIISSDGLNVEKEEAVFEAVMRWAGSGDAEAQAERQRALPTVFESVRCRLLPRAFLESRVERHPLVRAQPELLRKVQMVKDAHEGRITTLRKKKKGKDGAGAKEADKGTSKAKAEEDEEAERILPGILNDTLRFGMFLQDLIFMISEEGAVAYDPAANECYCASLSNQVPKNHVSLVTKENQVFVAGGLFYNEDNKEDPMSAYFLQFDHLDSEWLGMPPLPSPRCLFGLGEALNSIYVVGGREIKDGERCLDSVMCYDRLSFKWGESDPLPYVVYGHTVLSHMDLVYVIGGKGSDRKCLNKMCVYDPKKFEWKELAPMQTARSLFGATVHDGRIIVAAGVTDTGLTSSAEVYSITDNKWAPFEAFPQERSSLSLVSLVGTLYAIGGFATLETESGELVPTELNDIWRYNEEEKKWEGVLREIAYAAGATFLPVRLNVLCLTKM.

A BTB domain is found at 33–98 (LDCVVRAGER…LYTSEIALDE (66 aa)). Residues 133-239 (CLAVFRLGLL…PRAFLESRVE (107 aa)) form the BACK domain. The segment at 265–295 (ITTLRKKKKGKDGAGAKEADKGTSKAKAEED) is disordered. Basic and acidic residues predominate over residues 275–292 (KDGAGAKEADKGTSKAKA). Kelch repeat units follow at residues 360-412 (QVFV…EALN), 413-462 (SIYV…SHMD), 463-510 (LVYV…VHDG), 512-557 (IIVA…SLVG), and 559-613 (LYAI…PVRL).

This sequence belongs to the KLHL40 family. Component of the BCR(KLHL40) E3 ubiquitin ligase complex, at least composed of CUL3, KLHL40 and RBX1. Interacts with LMOD3. As to expression, highly expressed in fetal (19, 23 and 31 weeks of gestation) and adult skeletal muscle; expression levels tend to be higher in fetal compared to postnatal muscles (at protein level). Also expressed in fetal and adult heart.

It is found in the cytoplasm. It localises to the myofibril. The protein localises to the sarcomere. Its subcellular location is the a band. The protein resides in the i band. In terms of biological role, substrate-specific adapter of a BCR (BTB-CUL3-RBX1) E3 ubiquitin ligase complex that acts as a key regulator of skeletal muscle development. The BCR(KLHL40) complex acts by mediating ubiquitination and degradation of TFDP1, thereby regulating the activity of the E2F:DP transcription factor complex. Promotes stabilization of LMOD3 by acting as a negative regulator of LMOD3 ubiquitination; the molecular process by which it negatively regulates ubiquitination of LMOD3 is however unclear. The polypeptide is Kelch-like protein 40 (Homo sapiens (Human)).